The chain runs to 115 residues: Large ribosomal subunit protein bL20c (115 aa).

The protein belongs to the bacterial ribosomal protein bL20 family.

It localises to the plastid. The protein resides in the chloroplast. Its function is as follows. Binds directly to 23S ribosomal RNA and is necessary for the in vitro assembly process of the 50S ribosomal subunit. It is not involved in the protein synthesizing functions of that subunit. This chain is Large ribosomal subunit protein bL20c, found in Chaetosphaeridium globosum (Charophycean green alga).